The sequence spans 147 residues: Large ribosomal subunit protein bL9 (147 aa).

Belongs to the bacterial ribosomal protein bL9 family.

In terms of biological role, binds to the 23S rRNA. In Natranaerobius thermophilus (strain ATCC BAA-1301 / DSM 18059 / JW/NM-WN-LF), this protein is Large ribosomal subunit protein bL9.